We begin with the raw amino-acid sequence, 142 residues long: Large ribosomal subunit protein uL16 (142 aa).

It belongs to the universal ribosomal protein uL16 family. Part of the 50S ribosomal subunit.

Its function is as follows. Binds 23S rRNA and is also seen to make contacts with the A and possibly P site tRNAs. The protein is Large ribosomal subunit protein uL16 of Thermotoga neapolitana (strain ATCC 49049 / DSM 4359 / NBRC 107923 / NS-E).